The sequence spans 149 residues: MKVIFLKDVKGKGKKGEIKNVADGYANNFLFKQGLAIEATPANLKALEAQKQKEQRQAAEELANAKKLKEQLEKLTVEIAAKAGEGGRLFGSITSKQIAEALQAQHGLKLDKRKIELNDAIRALGYTNVPVKLHPEVSATLKVHVTEQK.

The protein belongs to the bacterial ribosomal protein bL9 family.

Functionally, binds to the 23S rRNA. This Geobacillus thermodenitrificans (strain NG80-2) protein is Large ribosomal subunit protein bL9.